The primary structure comprises 201 residues: Recombination protein RecR (201 aa).

The segment at Cys60 to Cys75 adopts a C4-type zinc-finger fold. One can recognise a Toprim domain in the interval Arg83–Pro178.

The protein belongs to the RecR family.

May play a role in DNA repair. It seems to be involved in an RecBC-independent recombinational process of DNA repair. It may act with RecF and RecO. The polypeptide is Recombination protein RecR (Xanthobacter autotrophicus (strain ATCC BAA-1158 / Py2)).